The primary structure comprises 198 residues: UDP-N-acetylglucosamine transferase subunit ALG13 (198 aa).

The protein belongs to the glycosyltransferase 28 family. Heterodimer with ALG14 to form a functional enzyme.

It is found in the endoplasmic reticulum. The enzyme catalyses an N-acetyl-alpha-D-glucosaminyl-diphospho-di-trans,poly-cis-dolichol + UDP-N-acetyl-alpha-D-glucosamine = an N,N'-diacetylchitobiosyl-diphospho-di-trans,poly-cis-dolichol + UDP + H(+). Its function is as follows. Involved in protein N-glycosylation. Essential for the second step of the dolichol-linked oligosaccharide pathway. This chain is UDP-N-acetylglucosamine transferase subunit ALG13 (ALG13), found in Candida glabrata (strain ATCC 2001 / BCRC 20586 / JCM 3761 / NBRC 0622 / NRRL Y-65 / CBS 138) (Yeast).